Consider the following 238-residue polypeptide: uncharacterized protein (238 aa).

The protein belongs to the mimivirus L74/L77/R857 family.

This is an uncharacterized protein from Acanthamoeba polyphaga mimivirus (APMV).